A 159-amino-acid chain; its full sequence is 6,7-dimethyl-8-ribityllumazine synthase (159 aa).

Residues phenylalanine 23, 61–63 (SFE), and 85–87 (AVI) contribute to the 5-amino-6-(D-ribitylamino)uracil site. 90-91 (DT) contacts (2S)-2-hydroxy-3-oxobutyl phosphate. The Proton donor role is filled by histidine 93. Phenylalanine 118 is a 5-amino-6-(D-ribitylamino)uracil binding site. Arginine 132 is a binding site for (2S)-2-hydroxy-3-oxobutyl phosphate.

Belongs to the DMRL synthase family.

It carries out the reaction (2S)-2-hydroxy-3-oxobutyl phosphate + 5-amino-6-(D-ribitylamino)uracil = 6,7-dimethyl-8-(1-D-ribityl)lumazine + phosphate + 2 H2O + H(+). It participates in cofactor biosynthesis; riboflavin biosynthesis; riboflavin from 2-hydroxy-3-oxobutyl phosphate and 5-amino-6-(D-ribitylamino)uracil: step 1/2. Its function is as follows. Catalyzes the formation of 6,7-dimethyl-8-ribityllumazine by condensation of 5-amino-6-(D-ribitylamino)uracil with 3,4-dihydroxy-2-butanone 4-phosphate. This is the penultimate step in the biosynthesis of riboflavin. The polypeptide is 6,7-dimethyl-8-ribityllumazine synthase (Synechococcus sp. (strain RCC307)).